Reading from the N-terminus, the 158-residue chain is 6,7-dimethyl-8-ribityllumazine synthase (158 aa).

5-amino-6-(D-ribitylamino)uracil-binding positions include Phe-22, 57–59, and 81–83; these read AVE and AVI. A (2S)-2-hydroxy-3-oxobutyl phosphate-binding site is contributed by 86-87; the sequence is GT. Residue His-89 is the Proton donor of the active site. Residue Phe-114 coordinates 5-amino-6-(D-ribitylamino)uracil. Arg-128 contributes to the (2S)-2-hydroxy-3-oxobutyl phosphate binding site.

This sequence belongs to the DMRL synthase family. In terms of assembly, forms an icosahedral capsid composed of 60 subunits, arranged as a dodecamer of pentamers.

It carries out the reaction (2S)-2-hydroxy-3-oxobutyl phosphate + 5-amino-6-(D-ribitylamino)uracil = 6,7-dimethyl-8-(1-D-ribityl)lumazine + phosphate + 2 H2O + H(+). It participates in cofactor biosynthesis; riboflavin biosynthesis; riboflavin from 2-hydroxy-3-oxobutyl phosphate and 5-amino-6-(D-ribitylamino)uracil: step 1/2. Its function is as follows. Catalyzes the formation of 6,7-dimethyl-8-ribityllumazine by condensation of 5-amino-6-(D-ribitylamino)uracil with 3,4-dihydroxy-2-butanone 4-phosphate. This is the penultimate step in the biosynthesis of riboflavin. The chain is 6,7-dimethyl-8-ribityllumazine synthase from Shewanella halifaxensis (strain HAW-EB4).